The chain runs to 970 residues: Protein tweety (970 aa).

Over 1-47 (MGDYHEFTDQYKVPVIAKLLHALPHYNITFHKINSTFRPNDEIYLES) the chain is Extracellular. Residues Asn-27 and Asn-34 are each glycosylated (N-linked (GlcNAc...) asparagine). A helical membrane pass occupies residues 48 to 68 (LGILGSVPAALLIVSLLGLLF). Residues 69-89 (YLMTRCCDRKPRPAHSITSLK) lie on the Cytoplasmic side of the membrane. The chain crosses the membrane as a helical span at residues 90–110 (VALSIVTVMCCAAIGLGLYGN). Topologically, residues 111–219 (DDLHNGLLEV…GDQWELIRWP (109 aa)) are extracellular. N-linked (GlcNAc...) asparagine glycans are attached at residues Asn-136, Asn-166, and Asn-183. The helical transmembrane segment at 220–240 (GTVATLALLLVLCAVLLVGVA) threads the bilayer. At 241 to 246 (RHSRCA) the chain is on the cytoplasmic side. A helical membrane pass occupies residues 247-267 (LILFSVCGLLAVTGSWLMSGL). The Extracellular segment spans residues 268-395 (YLSSSVAVGD…RGLCEGGLLG (128 aa)). An N-linked (GlcNAc...) asparagine glycan is attached at Asn-359. Residues 396–416 (LVLMLIASFIAAILLTIMVWV) traverse the membrane as a helical segment. At 417–970 (DSHTWIYIRK…DESNYAVTEL (554 aa)) the chain is on the cytoplasmic side. Low complexity predominate over residues 532-571 (NAAANMPPTTQAAQQQQQQQAQQQQQQAQQQLGGPQPIYC). 3 disordered regions span residues 532 to 587 (NAAA…QHPH), 677 to 763 (RQNS…NESD), and 849 to 970 (MKAI…VTEL). Residues 572–587 (HHPHQHPHPHPHQHPH) are compositionally biased toward basic residues. Low complexity-rich tracts occupy residues 689–700 (HQHPPSLHQQQQ), 707–737 (QQQQ…QQHH), and 745–759 (QHQQ…QQQP). Residues 852–868 (IPPPRIGTPTSPPPPVA) show a composition bias toward pro residues. Gly residues-rich tracts occupy residues 883–894 (QNGGAVVGGGGA) and 931–945 (NGGG…GGGA). Residues 961–970 (DESNYAVTEL) show a composition bias toward polar residues.

This sequence belongs to the tweety family.

It localises to the cell membrane. Functionally, non-essential protein that probably acts as a chloride channel. The chain is Protein tweety (tty) from Drosophila melanogaster (Fruit fly).